The sequence spans 465 residues: Auxin transporter-like protein 3 (465 aa).

The Cytoplasmic segment spans residues 1–52; sequence MTSEKVETVVAGNYLEMEREEEGSKSTTGKLSKFFWHGGSVYDAWFSCASNQ. Residues 53–70 form a helical membrane-spanning segment; it reads VAQVLLTLPYSFSQLGML. At 71-72 the chain is on the extracellular side; sequence SG. Residues 73-93 form a helical membrane-spanning segment; that stretch reads ILFQIFYGLMGSWTAYIISVL. Residues 94-129 lie on the Cytoplasmic side of the membrane; that stretch reads YVEYRTRKEREKVDFRNHVIQWFEVLDGLLGKHWRN. A helical membrane pass occupies residues 130–150; sequence LGLFFNCTFLLFGSVIQLIAC. The Extracellular segment spans residues 151–165; that stretch reads ASNIYYINDHLDKRT. A helical membrane pass occupies residues 166 to 186; it reads WTYIFGACCATTVFIPSFHNY. Over 187 to 189 the chain is Cytoplasmic; that stretch reads RIW. Residues 190–210 traverse the membrane as a helical segment; the sequence is SFLGLVMTTYTAWYMTIASIL. Residues 211-225 lie on the Extracellular side of the membrane; sequence HGQAEDVKHSGPTKL. The helical transmembrane segment at 226–246 threads the bilayer; that stretch reads VLYFTGATNILYTFGGHAVTV. The Cytoplasmic portion of the chain corresponds to 247 to 259; that stretch reads EIMHAMWKPQKFK. A helical transmembrane segment spans residues 260–280; the sequence is MIYLIATLYVMTLTLPSAAAV. Topologically, residues 281–307 are extracellular; the sequence is YWAFGDNLLTHSNALSLLPRTGFRDTA. A helical transmembrane segment spans residues 308-328; sequence VILMLIHQFITFGFACTPLYF. Topologically, residues 329 to 349 are cytoplasmic; the sequence is VWEKFLGVHETKSLLKRALVR. A helical membrane pass occupies residues 350 to 370; that stretch reads LPVVIPIWFLAIIFPFFGPIN. Over 371 to 374 the chain is Extracellular; that stretch reads STVG. Residues 375 to 395 traverse the membrane as a helical segment; sequence SLLVSFTVYIIPALAHMVTFA. The Cytoplasmic portion of the chain corresponds to 396–421; it reads SAPARENAVERPPSFLGGWVGLYSVN. The helical transmembrane segment at 422–442 threads the bilayer; the sequence is VFVAVWVLVVGFGLGGWASML. Residues 443–465 lie on the Extracellular side of the membrane; the sequence is NFVHQIKTFGLFAKCFQCPPHKA.

This sequence belongs to the amino acid/polyamine transporter 2 family. Amino acid/auxin permease (AAAP) (TC 2.A.18.1) subfamily. In terms of tissue distribution, shoots and roots of nodulating plants. Low levels in roots, nodules, stems, petioles, leaves, shoot apices and flowers.

Its subcellular location is the cell membrane. Its function is as follows. Carrier protein involved in proton-driven auxin influx. Mediates the formation of auxin gradient from developing leaves (site of auxin biosynthesis) to tips by contributing to the loading of auxin in vascular tissues and facilitating acropetal (base to tip) auxin transport within inner tissues of the root apex, and basipetal (tip to base) auxin transport within outer tissues of the root apex. May be involved in lateral roots and nodules formation. This is Auxin transporter-like protein 3 (LAX3) from Medicago truncatula (Barrel medic).